The following is a 198-amino-acid chain: Nucleoid occlusion factor SlmA (198 aa).

In terms of domain architecture, HTH tetR-type spans 9-70 (RNRREEILQA…SLIEFIEDSL (62 aa)). The H-T-H motif DNA-binding region spans 33–52 (TTAKLAANVGVSEAALYRHF). A coiled-coil region spans residues 119 to 144 (DRLQGRINQLYERIEVQLRQVLRERK).

The protein belongs to the nucleoid occlusion factor SlmA family. As to quaternary structure, homodimer. Interacts with FtsZ.

It is found in the cytoplasm. It localises to the nucleoid. Functionally, required for nucleoid occlusion (NO) phenomenon, which prevents Z-ring formation and cell division over the nucleoid. Acts as a DNA-associated cell division inhibitor that binds simultaneously chromosomal DNA and FtsZ, and disrupts the assembly of FtsZ polymers. SlmA-DNA-binding sequences (SBS) are dispersed on non-Ter regions of the chromosome, preventing FtsZ polymerization at these regions. This chain is Nucleoid occlusion factor SlmA, found in Sodalis glossinidius (strain morsitans).